Here is a 462-residue protein sequence, read N- to C-terminus: Probable peptidoglycan glycosyltransferase FtsW (462 aa).

Residues 1–28 (MREPRHVPQLRASGRRFPQRGRRHRFGK) form a disordered region. The Cytoplasmic segment spans residues 1–92 (MREPRHVPQL…RSRMLDFDYS (92 aa)). Basic residues predominate over residues 13–27 (SGRRFPQRGRRHRFG). The helical transmembrane segment at 93-113 (LLWVSIALLGLGVVMVYSASI) threads the bilayer. Residues 114–127 (AMPDSPKYASYHDY) lie on the Periplasmic side of the membrane. Residues 128–148 (AFLLRHCVSLVVAFVAAVIAF) form a helical membrane-spanning segment. Over 149 to 158 (RVPVSTWDKY) the chain is Cytoplasmic. Residues 159 to 179 (APHLFLIALVGLVIVLIPHIG) form a helical membrane-spanning segment. Over 180-192 (KGVNGARRWIPLG) the chain is Periplasmic. Residues 193-215 (ITNMQPSEIMKLAVTIYAANYTV) traverse the membrane as a helical segment. Residues 216 to 223 (RKQEYMQS) are Cytoplasmic-facing. Residues 224 to 244 (FAKGFLPMAFAVGLVGALLLL) form a helical membrane-spanning segment. The Periplasmic portion of the chain corresponds to 245–247 (EPD). A helical transmembrane segment spans residues 248–268 (MGAFMVVAAIAMGVLFLGGVN). Topologically, residues 269 to 270 (GK) are cytoplasmic. A helical membrane pass occupies residues 271–291 (LFGGLVATAVGTFTMLVWLSP). Over 292 to 349 (WRRERIFAYLDPWDERYAQGKAYQLTHSLIAFGRGEWFGVGLGGSVEKLNYLPEAHTD) the chain is Periplasmic. Residues 350 to 370 (FILAVIGEELGFVGVLVVILL) traverse the membrane as a helical segment. Over 371 to 398 (FYWIVRRSFEIGRQALALDRTFAGLMAK) the chain is Cytoplasmic. Residues 399–419 (GVGIWFGAQAFINMGVNLGLL) traverse the membrane as a helical segment. Over 420-425 (PTKGLT) the chain is Periplasmic. The helical transmembrane segment at 426–446 (LPLVSYGGSGILLNCISLAVL) threads the bilayer. Residues 447-462 (LRVDYENRVLMRGGKV) are Cytoplasmic-facing.

Belongs to the SEDS family. FtsW subfamily.

Its subcellular location is the cell inner membrane. The catalysed reaction is [GlcNAc-(1-&gt;4)-Mur2Ac(oyl-L-Ala-gamma-D-Glu-L-Lys-D-Ala-D-Ala)](n)-di-trans,octa-cis-undecaprenyl diphosphate + beta-D-GlcNAc-(1-&gt;4)-Mur2Ac(oyl-L-Ala-gamma-D-Glu-L-Lys-D-Ala-D-Ala)-di-trans,octa-cis-undecaprenyl diphosphate = [GlcNAc-(1-&gt;4)-Mur2Ac(oyl-L-Ala-gamma-D-Glu-L-Lys-D-Ala-D-Ala)](n+1)-di-trans,octa-cis-undecaprenyl diphosphate + di-trans,octa-cis-undecaprenyl diphosphate + H(+). It participates in cell wall biogenesis; peptidoglycan biosynthesis. In terms of biological role, peptidoglycan polymerase that is essential for cell division. The protein is Probable peptidoglycan glycosyltransferase FtsW of Burkholderia thailandensis (strain ATCC 700388 / DSM 13276 / CCUG 48851 / CIP 106301 / E264).